Here is a 146-residue protein sequence, read N- to C-terminus: Holo-[acyl-carrier-protein] synthase (146 aa).

Positions 9 and 63 each coordinate Mg(2+).

It belongs to the P-Pant transferase superfamily. AcpS family. Mg(2+) is required as a cofactor.

It localises to the cytoplasm. The catalysed reaction is apo-[ACP] + CoA = holo-[ACP] + adenosine 3',5'-bisphosphate + H(+). In terms of biological role, transfers the 4'-phosphopantetheine moiety from coenzyme A to a Ser of acyl-carrier-protein. This Burkholderia ambifaria (strain MC40-6) protein is Holo-[acyl-carrier-protein] synthase.